A 174-amino-acid polypeptide reads, in one-letter code: 3-hydroxyanthranilate 3,4-dioxygenase (174 aa).

Arg-47 contacts O2. Fe cation is bound by residues His-51, Glu-57, and His-95. Glu-57 serves as a coordination point for substrate. Substrate is bound by residues Arg-99 and Glu-110. Positions 125, 128, 162, and 165 each coordinate Fe cation.

Belongs to the 3-HAO family. Homodimer. Requires Fe(2+) as cofactor.

It carries out the reaction 3-hydroxyanthranilate + O2 = (2Z,4Z)-2-amino-3-carboxymuconate 6-semialdehyde. The protein operates within cofactor biosynthesis; NAD(+) biosynthesis; quinolinate from L-kynurenine: step 3/3. Its activity is regulated as follows. Inhibited by 4-chloro-3-hydroxyanthranilate. Mechanism of inactivation involves the oxidation of the catalytic active site Fe(2+) to the catalytically inactive Fe(3+) oxidation state, superoxide production, and formation of two disulfide bonds between Cys-125 and Cys-128, and Cys-162 and Cys-165. Enzyme can be reactivated under reducing conditions. In terms of biological role, catalyzes the oxidative ring opening of 3-hydroxyanthranilate to 2-amino-3-carboxymuconate semialdehyde, which spontaneously cyclizes to quinolinate. The sequence is that of 3-hydroxyanthranilate 3,4-dioxygenase from Cupriavidus metallidurans (strain ATCC 43123 / DSM 2839 / NBRC 102507 / CH34) (Ralstonia metallidurans).